Consider the following 194-residue polypeptide: Large ribosomal subunit protein uL18 (194 aa).

The protein belongs to the universal ribosomal protein uL18 family. As to quaternary structure, part of the 50S ribosomal subunit. Contacts the 5S and 23S rRNAs.

This is one of the proteins that bind and probably mediate the attachment of the 5S RNA into the large ribosomal subunit, where it forms part of the central protuberance. This is Large ribosomal subunit protein uL18 from Methanococcus aeolicus (strain ATCC BAA-1280 / DSM 17508 / OCM 812 / Nankai-3).